A 283-amino-acid chain; its full sequence is Pantothenate synthetase (283 aa).

30–37 provides a ligand contact to ATP; the sequence is MGYLHEGH. The active-site Proton donor is His-37. Gln-61 is a binding site for (R)-pantoate. Gln-61 provides a ligand contact to beta-alanine. 147 to 150 lines the ATP pocket; sequence GLKD. A (R)-pantoate-binding site is contributed by Gln-153. ATP contacts are provided by residues Val-176 and 184–187; that span reads KSSR.

Belongs to the pantothenate synthetase family. As to quaternary structure, homodimer.

Its subcellular location is the cytoplasm. It carries out the reaction (R)-pantoate + beta-alanine + ATP = (R)-pantothenate + AMP + diphosphate + H(+). It participates in cofactor biosynthesis; (R)-pantothenate biosynthesis; (R)-pantothenate from (R)-pantoate and beta-alanine: step 1/1. Its function is as follows. Catalyzes the condensation of pantoate with beta-alanine in an ATP-dependent reaction via a pantoyl-adenylate intermediate. This is Pantothenate synthetase from Halalkalibacterium halodurans (strain ATCC BAA-125 / DSM 18197 / FERM 7344 / JCM 9153 / C-125) (Bacillus halodurans).